Reading from the N-terminus, the 685-residue chain is Sodium-dependent phosphate transporter 1 (685 aa).

The next 6 membrane-spanning stretches (helical) occupy residues 25–45 (FLWM…SVGA), 66–86 (ACIL…AKVS), 106–126 (LMAG…AASF), 162–182 (IVLS…LLFY), 201–221 (ALPI…MYSG), and 234–254 (GIIL…WFFV). The segment covering 482–492 (VEAEEQEEGSI) has biased composition (acidic residues). The tract at residues 482–513 (VEAEEQEEGSIEDVATDRKSSSSSLEERHDQD) is disordered. Residues 496 to 513 (ATDRKSSSSSLEERHDQD) are compositionally biased toward basic and acidic residues. The next 4 membrane-spanning stretches (helical) occupy residues 517–537 (VSLL…FAHG), 565–585 (ATPI…LWVW), 606–626 (FSIE…GLPI), and 656–676 (IFLA…AIMA).

This sequence belongs to the inorganic phosphate transporter (PiT) (TC 2.A.20) family.

It is found in the cell membrane. The catalysed reaction is 2 Na(+)(out) + phosphate(out) = 2 Na(+)(in) + phosphate(in). Functionally, sodium-phosphate symporter which preferentially transports the monovalent form of phosphate with a stoichiometry of two sodium ions per phosphate ion. This is Sodium-dependent phosphate transporter 1 (slc20a1) from Xenopus tropicalis (Western clawed frog).